We begin with the raw amino-acid sequence, 365 residues long: 1-aminocyclopropane-1-carboxylate oxidase homolog 9 (365 aa).

Residues 214 to 313 (KGLLMLCHYY…RISVACFVSS (100 aa)) enclose the Fe2OG dioxygenase domain. Residues histidine 238, aspartate 240, and histidine 294 each contribute to the Fe cation site. Residue arginine 304 participates in 2-oxoglutarate binding.

Belongs to the iron/ascorbate-dependent oxidoreductase family. Fe(2+) is required as a cofactor.

This chain is 1-aminocyclopropane-1-carboxylate oxidase homolog 9, found in Arabidopsis thaliana (Mouse-ear cress).